The primary structure comprises 64 residues: Large ribosomal subunit protein bL35 (64 aa).

Belongs to the bacterial ribosomal protein bL35 family.

This is Large ribosomal subunit protein bL35 from Vibrio metschnikovii.